We begin with the raw amino-acid sequence, 389 residues long: Probable inactive purple acid phosphatase 29 (389 aa).

The first 34 residues, 1-34 (MADNRRRRSLFDFLLFSVFLGLACLCLSPIPATA), serve as a signal peptide directing secretion. N-linked (GlcNAc...) asparagine glycosylation is present at Asn80. Asn136 is a binding site for substrate. Asn136 is a binding site for Zn(2+). 2 N-linked (GlcNAc...) asparagine glycosylation sites follow: Asn191 and Asn267. His303 serves as a coordination point for Zn(2+). Position 303 to 305 (303 to 305 (HDH)) interacts with substrate. A Fe cation-binding site is contributed by His305. An N-linked (GlcNAc...) asparagine glycan is attached at Asn380.

Belongs to the metallophosphoesterase superfamily. Purple acid phosphatase family. Homodimer. Requires Fe cation as cofactor. Zn(2+) serves as cofactor. As to expression, expressed in roots, stems, leaves, flowers and siliques.

It is found in the secreted. The chain is Probable inactive purple acid phosphatase 29 (PAP29) from Arabidopsis thaliana (Mouse-ear cress).